A 62-amino-acid chain; its full sequence is DNA-directed RNA polymerase subunit Rpo10 (62 aa).

Cys6, Cys9, Cys43, and Cys44 together coordinate Zn(2+).

Belongs to the archaeal Rpo10/eukaryotic RPB10 RNA polymerase subunit family. Part of the RNA polymerase complex. The cofactor is Zn(2+).

The protein resides in the cytoplasm. The catalysed reaction is RNA(n) + a ribonucleoside 5'-triphosphate = RNA(n+1) + diphosphate. DNA-dependent RNA polymerase (RNAP) catalyzes the transcription of DNA into RNA using the four ribonucleoside triphosphates as substrates. This is DNA-directed RNA polymerase subunit Rpo10 from Methanoregula boonei (strain DSM 21154 / JCM 14090 / 6A8).